The chain runs to 425 residues: Histidine--tRNA ligase (425 aa).

Belongs to the class-II aminoacyl-tRNA synthetase family. In terms of assembly, homodimer.

It is found in the cytoplasm. It carries out the reaction tRNA(His) + L-histidine + ATP = L-histidyl-tRNA(His) + AMP + diphosphate + H(+). In Shewanella sp. (strain MR-7), this protein is Histidine--tRNA ligase.